The following is a 1141-amino-acid chain: DNA-directed RNA polymerase subunit beta (1141 aa).

Residues 1117–1141 (GINISREEPPGQLDDTPDTFSRGGM) form a disordered region.

This sequence belongs to the RNA polymerase beta chain family. As to quaternary structure, the RNAP catalytic core consists of 2 alpha, 1 beta, 1 beta' and 1 omega subunit. When a sigma factor is associated with the core the holoenzyme is formed, which can initiate transcription.

The catalysed reaction is RNA(n) + a ribonucleoside 5'-triphosphate = RNA(n+1) + diphosphate. DNA-dependent RNA polymerase catalyzes the transcription of DNA into RNA using the four ribonucleoside triphosphates as substrates. The protein is DNA-directed RNA polymerase subunit beta of Rubrobacter xylanophilus (strain DSM 9941 / JCM 11954 / NBRC 16129 / PRD-1).